The primary structure comprises 153 residues: NAD(P)H-quinone oxidoreductase subunit N (153 aa).

Belongs to the complex I NdhN subunit family. In terms of assembly, NDH-1 can be composed of about 15 different subunits; different subcomplexes with different compositions have been identified which probably have different functions.

It is found in the cellular thylakoid membrane. The enzyme catalyses a plastoquinone + NADH + (n+1) H(+)(in) = a plastoquinol + NAD(+) + n H(+)(out). It carries out the reaction a plastoquinone + NADPH + (n+1) H(+)(in) = a plastoquinol + NADP(+) + n H(+)(out). Its function is as follows. NDH-1 shuttles electrons from an unknown electron donor, via FMN and iron-sulfur (Fe-S) centers, to quinones in the respiratory and/or the photosynthetic chain. The immediate electron acceptor for the enzyme in this species is believed to be plastoquinone. Couples the redox reaction to proton translocation, and thus conserves the redox energy in a proton gradient. Cyanobacterial NDH-1 also plays a role in inorganic carbon-concentration. The polypeptide is NAD(P)H-quinone oxidoreductase subunit N (Synechococcus sp. (strain CC9605)).